Here is an 85-residue protein sequence, read N- to C-terminus: uncharacterized protein (85 aa).

An N-terminal signal peptide occupies residues 1-21; it reads MRPLLCALAGLALLCAVGALA. The segment covering 22–35 has biased composition (basic and acidic residues); that stretch reads DGREDRGSPGDTGE. The tract at residues 22-85 is disordered; that stretch reads DGREDRGSPG…EVVHLPGSTL (64 aa). The segment covering 36–51 has biased composition (low complexity); sequence RPAGPARGPGLEPARG.

It is found in the secreted. This is an uncharacterized protein from Homo sapiens (Human).